Here is a 322-residue protein sequence, read N- to C-terminus: tRNA-dihydrouridine(16) synthase (322 aa).

FMN contacts are provided by residues 8–10 (PME) and glutamine 69. The active-site Proton donor is the cysteine 99. FMN is bound by residues lysine 140, 200–202 (NGD), and 224–225 (GR).

Belongs to the Dus family. DusC subfamily. The cofactor is FMN.

It catalyses the reaction 5,6-dihydrouridine(16) in tRNA + NADP(+) = uridine(16) in tRNA + NADPH + H(+). The catalysed reaction is 5,6-dihydrouridine(16) in tRNA + NAD(+) = uridine(16) in tRNA + NADH + H(+). In terms of biological role, catalyzes the synthesis of 5,6-dihydrouridine (D), a modified base found in the D-loop of most tRNAs, via the reduction of the C5-C6 double bond in target uridines. Specifically modifies U16 in tRNAs. The chain is tRNA-dihydrouridine(16) synthase from Cupriavidus necator (strain ATCC 17699 / DSM 428 / KCTC 22496 / NCIMB 10442 / H16 / Stanier 337) (Ralstonia eutropha).